Here is a 531-residue protein sequence, read N- to C-terminus: Tubulin-folding cofactor E (531 aa).

In terms of domain architecture, CAP-Gly spans 32 to 76 (GDVEGYSGTWIGVDWDQDGDGKHNGSVNGVFYFNGRSQSSASFVR). LRR repeat units lie at residues 84–109 (ITLL…MYVL), 159–183 (LPNL…ALCE), 185–213 (LPAL…NIRV), 233–256 (LPGI…SSSD), 260–284 (FNSL…KLSQ), 285–308 (LPCL…VNGT), 318–342 (FPSL…ALNG), 344–366 (PQLV…GVPR), and 474–497 (VGKL…LFLQ).

Belongs to the TBCE family. As to quaternary structure, supercomplex made of cofactors A to E. Cofactors A and D function by capturing and stabilizing tubulin in a quasi-native conformation. Cofactor E binds to the cofactor D-tubulin complex; interaction with cofactor C then causes the release of tubulin polypeptides that are committed to the native state.

The protein localises to the cytoplasm. Essential tubulin-folding protein involved in the tubulin folding pathway. Not essential for cell viability. Probably involved in the binding of alpha-tubulin in the multimeric supercomplex. In Arabidopsis thaliana (Mouse-ear cress), this protein is Tubulin-folding cofactor E (TFCE).